We begin with the raw amino-acid sequence, 321 residues long: Secreted RxLR effector protein 71 (321 aa).

Residues 1 to 23 form the signal peptide; the sequence is MRPTGWRWPVLSLLLVLLPFQAA. The RxLR signature appears at 84 to 87; it reads RSLR. An N-linked (GlcNAc...) asparagine glycan is attached at N114. The tract at residues 210-237 is disordered; the sequence is VSLGRDGNGPVRGISSSPTRLTRPRMGG.

It belongs to the RxLR effector family.

It localises to the secreted. It is found in the host cell. Its function is as follows. Secreted effector that partially suppresses the host cell death induced by cell death-inducing proteins. This Plasmopara viticola (Downy mildew of grapevine) protein is Secreted RxLR effector protein 71.